Reading from the N-terminus, the 303-residue chain is N-acetyl-D-glucosamine kinase (303 aa).

Residues 4 to 11 (GFDIGGTK) and 133 to 140 (GVGGGLIF) each bind ATP. Residues H157, C177, C179, and C184 each contribute to the Zn(2+) site.

It belongs to the ROK (NagC/XylR) family. NagK subfamily.

It catalyses the reaction N-acetyl-D-glucosamine + ATP = N-acetyl-D-glucosamine 6-phosphate + ADP + H(+). It functions in the pathway cell wall biogenesis; peptidoglycan recycling. Its function is as follows. Catalyzes the phosphorylation of N-acetyl-D-glucosamine (GlcNAc) derived from cell-wall degradation, yielding GlcNAc-6-P. This Escherichia coli O157:H7 protein is N-acetyl-D-glucosamine kinase.